We begin with the raw amino-acid sequence, 274 residues long: Acyl-coenzyme A diphosphatase YFT2 (274 aa).

Residues 1-11 (MIRQLNYWSRK) lie on the Cytoplasmic side of the membrane. A helical membrane pass occupies residues 12–32 (AYLIYPFQVFVGALLSIVVSS). Residues 33 to 60 (ETLNHQKETCALLKSSNIFNVIFAYKAN) are Lumenal-facing. The helical transmembrane segment at 61-81 (QLWPFLFFSLAFLQIYFHYLA) threads the bilayer. At 82-124 (RMDILPLPISSTETSSSYLTYTNHWPLLKNRIISIMITQYACK) the chain is on the cytoplasmic side. The helical transmembrane segment at 125–145 (FVLKYLLLFLNFQFIDHVFIW) threads the bilayer. The Lumenal segment spans residues 146–170 (TGGECSSGSKTTSAEKCRLENGKWD). A helical membrane pass occupies residues 171–191 (GGFDISGHFCFLVSISMILWM). His178 is a catalytic residue. Topologically, residues 192 to 215 (ELHLFSRFVQAEDMFWVVNKWVRA) are cytoplasmic. The helical transmembrane segment at 216 to 236 (CLAIVCAVLVIWICILWVTAI) threads the bilayer. At 237-247 (YYHTILEKVLG) the chain is on the lumenal side. Residue His239 is part of the active site. Residues 248–268 (CLMGFICPVFIYHILPKIGIL) form a helical membrane-spanning segment. Topologically, residues 269 to 274 (HNYLYL) are cytoplasmic.

Belongs to the FIT family. Yeast FIT2A/YFT2 subfamily.

The protein resides in the endoplasmic reticulum membrane. Its subcellular location is the vacuole. It catalyses the reaction an acyl-CoA + H2O = an acyl-4'-phosphopantetheine + adenosine 3',5'-bisphosphate + 2 H(+). The enzyme catalyses (9Z)-octadecenoyl-CoA + H2O = S-(9Z-octadecenoyl)-4'-phosphopantetheine + adenosine 3',5'-bisphosphate + 2 H(+). It carries out the reaction (5Z,8Z,11Z,14Z)-eicosatetraenoyl-CoA + H2O = S-(5Z,8Z,11Z,14Z-eicosatetraenoyl)-4'-phosphopantetheine + adenosine 3',5'-bisphosphate + 2 H(+). The catalysed reaction is hexadecanoyl-CoA + H2O = S-hexadecanoyl-4'-phosphopantetheine + adenosine 3',5'-bisphosphate + 2 H(+). In terms of biological role, fatty acyl-coenzyme A (CoA) diphosphatase that hydrolyzes fatty acyl-CoA to yield acyl-4'-phosphopantetheine and adenosine 3',5'-bisphosphate. Preferentially hydrolyzes unsaturated long-chain acyl-CoA substrates in the endoplasmic reticulum (ER) lumen. This catalytic activity is required for maintaining ER structure and for lipid droplets (LDs) biogenesis, which are lipid storage organelles involved in maintaining lipid and energy homeostasis. May directly bind to diacylglycerol (DAGs) and triacylglycerol, which is also important for LD biogenesis. May support directional budding of nacent LDs from the ER into the cytosol by reducing DAG levels at sites of LD formation. May play a role in the regulation of cell morphology and cytoskeletal organization. Involved in phospholipid biosynthesis. This is Acyl-coenzyme A diphosphatase YFT2 from Saccharomyces cerevisiae (strain ATCC 204508 / S288c) (Baker's yeast).